Here is a 533-residue protein sequence, read N- to C-terminus: Flavin-containing monooxygenase 5 (533 aa).

Arg5 carries the post-translational modification Dimethylated arginine. Residues 10–14 (GGGVS), Glu33, and 41–42 (LW) contribute to the FAD site. Ser54 is subject to Phosphoserine. At Tyr56 the chain carries Phosphotyrosine. Ser58 bears the Phosphoserine mark. Residue 62–63 (NT) participates in FAD binding. 196 to 199 (SGGD) is an NADP(+) binding site. A Phosphoserine modification is found at Ser280. A Phosphothreonine modification is found at Thr284. Position 401 is a phosphoserine (Ser401). A helical membrane pass occupies residues 510–530 (MVSAVTTGCFMLAVVFFAIIM).

The protein belongs to the FMO family. The cofactor is FAD. In terms of tissue distribution, expressed in liver.

It localises to the microsome membrane. The protein localises to the endoplasmic reticulum membrane. The enzyme catalyses N,N-dimethylaniline + NADPH + O2 + H(+) = N,N-dimethylaniline N-oxide + NADP(+) + H2O. The catalysed reaction is NADPH + O2 + H(+) = H2O2 + NADP(+). It catalyses the reaction heptan-2-one + NADPH + O2 + H(+) = pentyl acetate + NADP(+) + H2O. It carries out the reaction octan-3-one + NADPH + O2 + H(+) = pentyl propanoate + NADP(+) + H2O. The enzyme catalyses octan-3-one + NADPH + O2 + H(+) = ethyl hexanoate + NADP(+) + H2O. The catalysed reaction is hexan-3-one + NADPH + O2 + H(+) = ethyl butanoate + NADP(+) + H2O. It catalyses the reaction hexan-3-one + NADPH + O2 + H(+) = propyl propanoate + NADP(+) + H2O. It carries out the reaction heptan-4-one + NADPH + O2 + H(+) = propyl butanoate + NADP(+) + H2O. The enzyme catalyses (2E)-geranial + NADPH + O2 + H(+) = (1E)-2,6-dimethylhepta-1,5-dien-1-yl formate + NADP(+) + H2O. The catalysed reaction is sulcatone + NADPH + O2 + H(+) = 4-methylpent-3-en-1-yl acetate + NADP(+) + H2O. In terms of biological role, acts as a Baeyer-Villiger monooxygenase on a broad range of substrates. Catalyzes the insertion of an oxygen atom into a carbon-carbon bond adjacent to a carbonyl, which converts ketones to esters. Active on diverse carbonyl compounds, whereas soft nucleophiles are mostly non- or poorly reactive. In contrast with other forms of FMO it is non- or poorly active on 'classical' substrates such as drugs, pesticides, and dietary components containing soft nucleophilic heteroatoms. Able to oxidize drug molecules bearing a carbonyl group on an aliphatic chain, such as nabumetone and pentoxifylline. Also, in the absence of substrates, shows slow but yet significant NADPH oxidase activity. Acts as a positive modulator of cholesterol biosynthesis as well as glucose homeostasis, promoting metabolic aging via pleiotropic effects. The sequence is that of Flavin-containing monooxygenase 5 (FMO5) from Cavia porcellus (Guinea pig).